A 245-amino-acid polypeptide reads, in one-letter code: Alanyl-tRNA editing protein AlaX-M (245 aa).

Residues histidine 107, histidine 111, cysteine 210, and histidine 214 each contribute to the Zn(2+) site.

It belongs to the class-II aminoacyl-tRNA synthetase family. Editing domain AlaX-M subfamily. Zn(2+) serves as cofactor.

It localises to the cytoplasm. In terms of biological role, functions in trans to edit the amino acid moiety from mischarged charged tRNA(Ala). The sequence is that of Alanyl-tRNA editing protein AlaX-M (alaXM) from Methanosarcina acetivorans (strain ATCC 35395 / DSM 2834 / JCM 12185 / C2A).